The sequence spans 632 residues: Palmitoyltransferase ZDHHC17 (632 aa).

Residues 1 to 304 (MQREEGFNTK…LKADKEFRQK (304 aa)) are Cytoplasmic-facing. The segment at 11–305 (MADGPDEYET…KADKEFRQKV (295 aa)) is necessary and sufficient for interaction with DNAJC5 and SNAP25. ANK repeat units follow at residues 51–86 (THIDDYSTWDIVKATQYGIYERCRELVEAGYDVRQP), 89–118 (ENVTLLHWAAINNRIDLVKYYISKGAIVDQ), 123–152 (LNSTPLHWATRQGHLSMVVQLMKYGADPSL), 156–185 (EGCSCIHLAAQFGHTSIVAYLIAKGQDVDM), 189–219 (NGMTPLMWAAYRTHSVDPTRLLLTFNVSVNL), 224–253 (HKNTALHWAVLAGNTTVISLLLEAGGNVDA), and 257–286 (KGESALDLAKQRKNVWMINHLQEARQAKGY). Helical transmembrane passes span 305–325 (VMLGTPFLVIWLVGFIADLDI) and 326–346 (DSWLIKGLMYGGVWATVQFLS). Topologically, residues 347–357 (KSFFDHSMHSA) are cytoplasmic. The helical transmembrane segment at 358–378 (LPLGIYLATKFWMYVTWFFWF) threads the bilayer. Topologically, residues 379 to 381 (WND) are lumenal. Residues 382-402 (LNFLFIHLPFLANSVALFYNF) form a helical membrane-spanning segment. Residues 403–480 (GKSWKSDPGI…GNCVGAGNHR (78 aa)) lie on the Cytoplasmic side of the membrane. In terms of domain architecture, DHHC spans 437-487 (IFCSTCLIRKPVRSKHCGVCNRCIAKFDHHCPWVGNCVGAGNHRYFMGYLF). The active-site S-palmitoyl cysteine intermediate is C467. Residues 481–501 (YFMGYLFFLLFMICWMIYGCV) traverse the membrane as a helical segment. At 502-529 (SYWGLHCETTYTKDGFWTYITQIATCSP) the chain is on the lumenal side. A helical transmembrane segment spans residues 530–550 (WMFWMFLNSVFHFLWVAVLLM). At 551 to 632 (CQLYQITCLG…QISGSGYQLV (82 aa)) the chain is on the cytoplasmic side.

The protein belongs to the DHHC palmitoyltransferase family. AKR/ZDHHC17 subfamily. Interacts (via ANK repeats) with numerous proteins (via the consensus sequence motif [VIAP]-[VIT]-x-x-Q-P). Interacts (via ANK repeats) with CLIP3. Interacts (via ANK repeats) with HTT. Interacts (via ANK repeats) with DNAJC5 (via C-terminus). Interacts (via ANK repeats) with MAP6. Interacts (via ANK repeats) with SNAP23. Interacts (via ANK repeats) with SNAP25. Interacts (via ANK repeats) with EVL. Interacts with SPRED1 and SPRED3. Interacts with GPM6A and OPTN. May interact (via ANK repeats) with SPRED2. May interact with NTRK1; may regulate its localization and function. In terms of processing, autopalmitoylated. Autopalmitoylation has a regulatory role in ZDHHC17-mediated Mg(2+) transport. As to expression, expressed in liver, testis, kidney, heart, pancreas and brain. Highest expression was seen in the brain. Localized predominantly in the perinuclear regions of neurons from the cortex, striatum and hippocampus. Colocalized with HTT in the medium spiny neurons of the striatum and the spiny neurons that project into the globus pallidus.

Its subcellular location is the golgi apparatus membrane. It is found in the cytoplasmic vesicle membrane. The protein resides in the presynaptic cell membrane. The enzyme catalyses L-cysteinyl-[protein] + hexadecanoyl-CoA = S-hexadecanoyl-L-cysteinyl-[protein] + CoA. It carries out the reaction L-cysteinyl-[protein] + tetradecanoyl-CoA = S-tetradecanoyl-L-cysteinyl-[protein] + CoA. It catalyses the reaction L-cysteinyl-[protein] + octadecanoyl-CoA = S-octadecanoyl-L-cysteinyl-[protein] + CoA. Functionally, palmitoyltransferase that catalyzes the addition of palmitate onto various protein substrates and is involved in a variety of cellular processes. Has no stringent fatty acid selectivity and in addition to palmitate can also transfer onto target proteins myristate from tetradecanoyl-CoA and stearate from octadecanoyl-CoA. Palmitoyltransferase specific for a subset of neuronal proteins, including SNAP25, DLG4/PSD95, GAD2, SYT1 and HTT. Also palmitoylates neuronal protein GPM6A as well as SPRED1 and SPRED3. Could also play a role in axonogenesis through the regulation of NTRK1 and the downstream ERK1/ERK2 signaling cascade. May be involved in the sorting or targeting of critical proteins involved in the initiating events of endocytosis at the plasma membrane. May play a role in Mg(2+) transport. Could also palmitoylate DNAJC5 and regulate its localization to the Golgi membrane. Palmitoylates CASP6, thereby preventing its dimerization and subsequent activation. This Mus musculus (Mouse) protein is Palmitoyltransferase ZDHHC17.